Consider the following 2344-residue polypeptide: Peroxide stress-activated histidine kinase mak3 (2344 aa).

One can recognise a Protein kinase domain in the interval Met1–Leu295. Residues Ser12, Ser16, and Ser17 each carry the phosphoserine modification. Residues Ser486 to Ser503 are compositionally biased toward polar residues. The disordered stretch occupies residues Ser486–Leu506. TPR repeat units lie at residues Cys829 to Glu862 and Ala1340 to Leu1373. The PAC domain occupies Phe1730–Glu1781. Residues Asn1792–Ile2018 enclose the Histidine kinase domain. The residue at position 1795 (His1795) is a Phosphohistidine; by autocatalysis. Residues Lys2211–Leu2333 enclose the Response regulatory domain. Asp2263 carries the 4-aspartylphosphate modification.

The protein localises to the cytoplasm. It catalyses the reaction ATP + protein L-histidine = ADP + protein N-phospho-L-histidine.. Functionally, involved in the control of the SAPK-dependent transcriptional response to peroxide stress. Regulates sty1 activity. This chain is Peroxide stress-activated histidine kinase mak3 (mak3), found in Schizosaccharomyces pombe (strain 972 / ATCC 24843) (Fission yeast).